The chain runs to 504 residues: Maturase K (504 aa).

The protein belongs to the intron maturase 2 family. MatK subfamily.

It localises to the plastid. The protein resides in the chloroplast. In terms of biological role, usually encoded in the trnK tRNA gene intron. Probably assists in splicing its own and other chloroplast group II introns. The sequence is that of Maturase K from Chimaphila umbellata (Pipsissewa).